Consider the following 388-residue polypeptide: MRYLTAGESHGPGLTTIIEGLPAGMPLLAEDVNKELKRRQGGHGRGARMRIEKDQVQITAGIRHGKTLGAPVAMFVENKDWKHWETVMSIEPVPEKNEKSRRVSRPRPGHADLVGGMKYGHNDMRNVLERSSARETTVRVAAGAVAKKLLHELGIEVAGHVLEIGGTRANLTRDYAVSEIQETSEASPVRCLDGVAAEEMMQKIDDAKKNGDTIGGIVEVVVGGVPAGLGSYVQWDKKLDAKIARAIVSINAFKGAEFGVGFEAARKPGSEVMDEILWSKEDGYTRRTNNLGGFEGGMTNGMPIVVRGVMKPIPTLYKPLQSVDIDSKETFNASVERSDSCAVPAASVVAEAVVAWEVAVAVLEKFDGDRFDTLKKHVEEHRNLTKEF.

Arg39 and Arg45 together coordinate NADP(+). Residues 95–118 (EKNEKSRRVSRPRPGHADLVGGMK) form a disordered region. Residues 130–132 (RSS), 251–252 (NA), Gly296, 311–315 (KPIPT), and Arg337 each bind FMN.

It belongs to the chorismate synthase family. Homotetramer. The cofactor is FMNH2.

The catalysed reaction is 5-O-(1-carboxyvinyl)-3-phosphoshikimate = chorismate + phosphate. It participates in metabolic intermediate biosynthesis; chorismate biosynthesis; chorismate from D-erythrose 4-phosphate and phosphoenolpyruvate: step 7/7. Catalyzes the anti-1,4-elimination of the C-3 phosphate and the C-6 proR hydrogen from 5-enolpyruvylshikimate-3-phosphate (EPSP) to yield chorismate, which is the branch point compound that serves as the starting substrate for the three terminal pathways of aromatic amino acid biosynthesis. This reaction introduces a second double bond into the aromatic ring system. This chain is Chorismate synthase, found in Listeria monocytogenes serotype 4b (strain F2365).